The sequence spans 644 residues: MIRIRFGMDVLLVLLLATCLLSPTHGTPLEWDFAVTLRTKIQFMDSSWQTIATAAHEFDELSALTFDESEELIYFNDLKHRNGSIFSLKRDLIAANHVVEQTIARTGNESVAGLAYDPLTTNLFWSDTEQRKIFFASIHGSATPKVLVDLSAEGGRPDGVAVDVCRRKLYWTNSNVTHPTVERIDLDGSNRTVIVNSDIDMPRGIVVDQLSDRLFWIDDLKGVFFSVESSKLDGSDRQVVLKDKHHEPLNLAVTNDAIYWTDRTTRSVWSHPKVPVIRVTTTSKPEEEDSTDATDFKDPEPVAEDCPLVRVANLSEEARGIVARTGFYQRLQKDHHCASIVRKVKQRVDEQSRKFEVSSLLDQKMKVLENERCMNNGEYKAATDLCICPTGFKGSRCEIRECHNYCVHGTCQMSESAYPKCYCQPGFTGERCEVSVCAGLCLNGGHCRASKEENEAPTCECPAKFGGARCEQNSTEICSLFCRLLKHEPEMYVPFGCHSICEELAQGNSTNIAVPQYQHLEVCLTPTVWTSSVIIILVVGIVSSLLLVAVIVHGIRRLYKPKRPRIRKTFVVRKQARTNSAGDTPLTNRPLATEQCEITIENCCNMNICETPCFDPKLVEQTLSKSSCKEDKKILIHNMEDDLY.

Residues 1–26 (MIRIRFGMDVLLVLLLATCLLSPTHG) form the signal peptide. Residues 27-531 (TPLEWDFAVT…VCLTPTVWTS (505 aa)) lie on the Extracellular side of the membrane. N-linked (GlcNAc...) asparagine glycosylation is found at N82 and N108. LDL-receptor class B repeat units lie at residues 121–166 (TNLF…DVCR), 167–211 (RKLY…DQLS), and 212–257 (DRLF…TNDA). 2 N-linked (GlcNAc...) asparagine glycosylation sites follow: N175 and N190. N313 is a glycosylation site (N-linked (GlcNAc...) asparagine). 2 EGF-like domains span residues 398–430 (EIRE…FTGE) and 433–471 (EVSV…ARCE). 5 disulfide bridges follow: C402/C411, C406/C421, C437/C447, C441/C459, and C461/C470. 2 N-linked (GlcNAc...) asparagine glycosylation sites follow: N473 and N508. The chain crosses the membrane as a helical span at residues 532–552 (SVIIILVVGIVSSLLLVAVIV). At 553 to 644 (HGIRRLYKPK…LIHNMEDDLY (92 aa)) the chain is on the cytoplasmic side.

Belongs to the cueball family.

The protein localises to the cell membrane. Has a role in spermatogenesis and oogenesis. The protein is Protein cueball of Drosophila yakuba (Fruit fly).